The chain runs to 445 residues: Putative transcription factor bHLH056 (445 aa).

Disordered stretches follow at residues 36 to 70 (NQTHRQSYDPPPILRGSGSGRGEENAPLSQPPPHL), 224 to 260 (QIQPATESKLKAREETHGTEEARGSTSRKRSRTAEMH), and 365 to 445 (PFPN…QPTA). Over residues 231-246 (SKLKAREETHGTEEAR) the composition is skewed to basic and acidic residues. One can recognise a bHLH domain in the interval 255 to 304 (RTAEMHNLAERRRREKINEKMKTLQQLIPRCNKSTKVSTLDDAIEYVKSL). The segment covering 418 to 433 (QGQTTSQLSSGQASSS) has biased composition (low complexity).

In terms of assembly, homodimer.

It is found in the nucleus. The chain is Putative transcription factor bHLH056 (BHLH56) from Arabidopsis thaliana (Mouse-ear cress).